Consider the following 655-residue polypeptide: Proprotein convertase subtilisin/kexin type 4 (655 aa).

The N-terminal stretch at M1–A26 is a signal peptide. The propeptide occupies Q27–R110. Residues Q123–V437 enclose the Peptidase S8 domain. Active-site charge relay system residues include D155, H196, and S370. The 135-residue stretch at T446 to D580 folds into the P/Homo B domain. A glycan (N-linked (GlcNAc...) asparagine) is linked at N472.

The protein belongs to the peptidase S8 family. Furin subfamily. The proPCSK4 form interacts with HSPA5; the interaction takes place at the endoplasmic reticulum. Post-translationally, N-glycosylated. Synthesized in the endoplasmic reticulum as a zymogen, is matured by autocatalytic cleavage between the prodomain and the catalytic domain. In terms of tissue distribution, expressed abundantly in the testis since postnatal Day 16. In testis, strongly detected in round and elongated spermatids as well as spermatocytes. Also observed in residual bodies engulfed by Sertoli cells at spermatogenic stages VIII and IX. In ovaries, expressed in macrophage-like cells of the ovarian theca, interstitium and corpora lutea.

The protein resides in the cytoplasmic vesicle. It localises to the secretory vesicle. It is found in the acrosome membrane. Functionally, proprotein convertase involved in the processing of hormone and other protein precursors at sites comprised of pairs of basic amino acid residues. In males, important for ADAM2 processing as well as other acrosomal proteins with roles in fertilization and critical for normal fertilization events such as sperm capacitation, acrosome reaction and binding of sperm to zona pellucida. Also plays a role in female fertility, involved in the regulation of trophoblast migration and placental development, may be through the proteolytical processing and activation of proteins such as IGF2. May also participate in folliculogenesis in the ovaries. In Mus musculus (Mouse), this protein is Proprotein convertase subtilisin/kexin type 4 (Pcsk4).